A 275-amino-acid chain; its full sequence is Probable ABC transporter permease protein PH1216 (275 aa).

The next 6 helical transmembrane spans lie at 10–30, 73–93, 105–125, 137–157, 181–203, and 241–261; these read LLYI…WSAI, IFTT…GFTI, LLAL…IPLV, ILGL…LLFT, IYTK…YQFT, and IQMA…IALG. The ABC transmembrane type-1 domain maps to 68-260; the sequence is ILNSLIFTTF…LPTLLIMIAL (193 aa).

Belongs to the binding-protein-dependent transport system permease family. MalFG subfamily.

The protein localises to the cell membrane. Its function is as follows. Probably part of a binding-protein-dependent transport system PH1214/15/16. Probably responsible for the translocation of the substrate across the membrane. This chain is Probable ABC transporter permease protein PH1216, found in Pyrococcus horikoshii (strain ATCC 700860 / DSM 12428 / JCM 9974 / NBRC 100139 / OT-3).